The primary structure comprises 309 residues: Carboxylesterase Culp6 homolog (309 aa).

The chain crosses the membrane as a helical span at residues 5 to 25; that stretch reads ITVIAVLIVLALIGVGIVQYV. The cysteines at positions 55 and 146 are disulfide-linked. Catalysis depends on residues Ser157, Asp253, and His279. A disulfide bond links Cys249 and Cys256.

The protein belongs to the cutinase family.

The protein resides in the cell membrane. It catalyses the reaction a butanoate ester + H2O = an aliphatic alcohol + butanoate + H(+). With respect to regulation, inhibited by tetrahydrolipstatin (THL), a specific lipase inhibitor. In terms of biological role, esterase that may be involved in cell wall biosynthesis and/or maintenance. Hydrolyzes pNP-butyrate (C4). The chain is Carboxylesterase Culp6 homolog from Corynebacterium glutamicum (strain ATCC 13032 / DSM 20300 / JCM 1318 / BCRC 11384 / CCUG 27702 / LMG 3730 / NBRC 12168 / NCIMB 10025 / NRRL B-2784 / 534).